The sequence spans 79 residues: Small ribosomal subunit protein bS18 (79 aa).

Belongs to the bacterial ribosomal protein bS18 family. Part of the 30S ribosomal subunit. Forms a tight heterodimer with protein bS6.

Its function is as follows. Binds as a heterodimer with protein bS6 to the central domain of the 16S rRNA, where it helps stabilize the platform of the 30S subunit. The sequence is that of Small ribosomal subunit protein bS18 from Rhodopseudomonas palustris (strain BisB18).